Consider the following 194-residue polypeptide: Large ribosomal subunit protein bL9 (194 aa).

The segment at Q148–A194 is disordered.

This sequence belongs to the bacterial ribosomal protein bL9 family.

Its function is as follows. Binds to the 23S rRNA. The chain is Large ribosomal subunit protein bL9 from Caulobacter vibrioides (strain ATCC 19089 / CIP 103742 / CB 15) (Caulobacter crescentus).